The following is a 455-amino-acid chain: Serine--tRNA ligase (455 aa).

252–254 (TAE) serves as a coordination point for L-serine. ATP is bound by residues 283-285 (RKE) and V299. E306 is a binding site for L-serine. 370–373 (EVVS) contributes to the ATP binding site. Position 406 (T406) interacts with L-serine.

It belongs to the class-II aminoacyl-tRNA synthetase family. Type-1 seryl-tRNA synthetase subfamily. In terms of assembly, homodimer. The tRNA molecule binds across the dimer.

It is found in the cytoplasm. The enzyme catalyses tRNA(Ser) + L-serine + ATP = L-seryl-tRNA(Ser) + AMP + diphosphate + H(+). It carries out the reaction tRNA(Sec) + L-serine + ATP = L-seryl-tRNA(Sec) + AMP + diphosphate + H(+). The protein operates within aminoacyl-tRNA biosynthesis; selenocysteinyl-tRNA(Sec) biosynthesis; L-seryl-tRNA(Sec) from L-serine and tRNA(Sec): step 1/1. Catalyzes the attachment of serine to tRNA(Ser). Is also able to aminoacylate tRNA(Sec) with serine, to form the misacylated tRNA L-seryl-tRNA(Sec), which will be further converted into selenocysteinyl-tRNA(Sec). The polypeptide is Serine--tRNA ligase (Pyrococcus abyssi (strain GE5 / Orsay)).